A 202-amino-acid polypeptide reads, in one-letter code: NAD(P)H dehydrogenase (quinone) (202 aa).

The region spanning 7–193 (VLVLYYSMYG…TIARFQGRHF (187 aa)) is the Flavodoxin-like domain. Residues 13–18 (SMYGHI) and 82–84 (TRF) contribute to the FMN site. Position 15 (Tyr-15) interacts with NAD(+). Trp-102 is a binding site for substrate. Residues 117–122 (STATGG) and His-137 contribute to the FMN site.

Belongs to the WrbA family. FMN serves as cofactor.

The catalysed reaction is a quinone + NADH + H(+) = a quinol + NAD(+). It carries out the reaction a quinone + NADPH + H(+) = a quinol + NADP(+). This is NAD(P)H dehydrogenase (quinone) from Rhodospirillum rubrum (strain ATCC 11170 / ATH 1.1.1 / DSM 467 / LMG 4362 / NCIMB 8255 / S1).